Here is a 168-residue protein sequence, read N- to C-terminus: Transcription elongation factor GreB (168 aa).

Residues 61-84 (KKMLREIDSRVRFLRKRLENLKVV) adopt a coiled-coil conformation.

The protein belongs to the GreA/GreB family. GreB subfamily.

Necessary for efficient RNA polymerase transcription elongation past template-encoded arresting sites. The arresting sites in DNA have the property of trapping a certain fraction of elongating RNA polymerases that pass through, resulting in locked ternary complexes. Cleavage of the nascent transcript by cleavage factors such as GreA or GreB allows the resumption of elongation from the new 3'terminus. GreB releases sequences of up to 9 nucleotides in length. This Pseudomonas aeruginosa (strain ATCC 15692 / DSM 22644 / CIP 104116 / JCM 14847 / LMG 12228 / 1C / PRS 101 / PAO1) protein is Transcription elongation factor GreB.